A 132-amino-acid chain; its full sequence is Keratin, high-sulfur matrix protein, IIIA3 (132 aa).

The keratin products of mammalian epidermal derivatives such as wool and hair consist of microfibrils embedded in a rigid matrix of other proteins. The matrix proteins include the high-sulfur and high-tyrosine keratins, having molecular weights of 6-20 kDa, whereas the microfibrils contain the larger, low-sulfur keratins (40-56 kDa). The chain is Keratin, high-sulfur matrix protein, IIIA3 from Capra hircus (Goat).